Consider the following 477-residue polypeptide: Cysteine--tRNA ligase (477 aa).

Residue C29 coordinates Zn(2+). Positions 31 to 41 match the 'HIGH' region motif; sequence PTVYNYFHVGN. The Zn(2+) site is built by C209, H234, and E238. Residues 267-271 carry the 'KMSKS' region motif; sequence KMSKS. Residue K270 coordinates ATP.

This sequence belongs to the class-I aminoacyl-tRNA synthetase family. Monomer. Zn(2+) is required as a cofactor.

It is found in the cytoplasm. The catalysed reaction is tRNA(Cys) + L-cysteine + ATP = L-cysteinyl-tRNA(Cys) + AMP + diphosphate. The polypeptide is Cysteine--tRNA ligase (Desulfitobacterium hafniense (strain DSM 10664 / DCB-2)).